Here is an 894-residue protein sequence, read N- to C-terminus: Bifunctional glutamine synthetase adenylyltransferase/adenylyl-removing enzyme (894 aa).

Residues 1–410 (MPANTSAAIA…HFEQVFILPS (410 aa)) form an adenylyl removase region. An adenylyl transferase region spans residues 415–894 (SHPLSELWLD…QVFEQALDFS (480 aa)).

This sequence belongs to the GlnE family. The cofactor is Mg(2+).

The enzyme catalyses [glutamine synthetase]-O(4)-(5'-adenylyl)-L-tyrosine + phosphate = [glutamine synthetase]-L-tyrosine + ADP. The catalysed reaction is [glutamine synthetase]-L-tyrosine + ATP = [glutamine synthetase]-O(4)-(5'-adenylyl)-L-tyrosine + diphosphate. Involved in the regulation of glutamine synthetase GlnA, a key enzyme in the process to assimilate ammonia. When cellular nitrogen levels are high, the C-terminal adenylyl transferase (AT) inactivates GlnA by covalent transfer of an adenylyl group from ATP to specific tyrosine residue of GlnA, thus reducing its activity. Conversely, when nitrogen levels are low, the N-terminal adenylyl removase (AR) activates GlnA by removing the adenylyl group by phosphorolysis, increasing its activity. The regulatory region of GlnE binds the signal transduction protein PII (GlnB) which indicates the nitrogen status of the cell. This Chromobacterium violaceum (strain ATCC 12472 / DSM 30191 / JCM 1249 / CCUG 213 / NBRC 12614 / NCIMB 9131 / NCTC 9757 / MK) protein is Bifunctional glutamine synthetase adenylyltransferase/adenylyl-removing enzyme.